A 291-amino-acid polypeptide reads, in one-letter code: MKQVWASPAKLNVFLYITGQQPDGYHQLQTLFIFLNYGDEITIVPRQDEQILLMTPIPNVSHDQNLVVRAARLLQQQPGKKSQTGSLPRGAEISIKKYVPIGGGLGGGSSNAATVLLALNHLWGFNFSEDELAVLGLKLGADVPVFIYGNSAFAEGVGDRLQPVEWPLKWYLVLYSDVKISTKMIFSDPELKRNTPRRSLSTLLAAPYHNDCEPVVRKRFPKVDELLSWISQYAPARLTGTGACIFSEFNTESEARDILEKVPKGIYGFVASSTQISPLKKDFLDVRSQIS.

Lys10 is a catalytic residue. Residue 100–110 (PIGGGLGGGSS) coordinates ATP. The active site involves Asp142.

It belongs to the GHMP kinase family. IspE subfamily. As to quaternary structure, homodimer.

It catalyses the reaction 4-CDP-2-C-methyl-D-erythritol + ATP = 4-CDP-2-C-methyl-D-erythritol 2-phosphate + ADP + H(+). The protein operates within isoprenoid biosynthesis; isopentenyl diphosphate biosynthesis via DXP pathway; isopentenyl diphosphate from 1-deoxy-D-xylulose 5-phosphate: step 3/6. Its function is as follows. Catalyzes the phosphorylation of the position 2 hydroxy group of 4-diphosphocytidyl-2C-methyl-D-erythritol. This Hamiltonella defensa subsp. Acyrthosiphon pisum (strain 5AT) protein is 4-diphosphocytidyl-2-C-methyl-D-erythritol kinase.